A 439-amino-acid polypeptide reads, in one-letter code: Nuclear hormone receptor family member nhr-97 (439 aa).

A compositionally biased stretch (polar residues) spans 1–13 (MSGDAQPSSNQRA). Residues 1 to 22 (MSGDAQPSSNQRATEARPPPSP) form a disordered region. Positions 32 to 108 (GALCVVCGDR…VGMKIEAVKM (77 aa)) form a DNA-binding region, nuclear receptor. NR C4-type zinc fingers lie at residues 35 to 56 (CVVC…CHGC) and 72 to 96 (CRYG…FHRC). Residues 112–135 (LTKRKKEKTDEDDTDDGGSHESFE) form a disordered region. Residues 173-408 (FVQPSLQNLL…GEGLLFWQLY (236 aa)) form the NR LBD domain.

Belongs to the nuclear hormone receptor family.

It is found in the nucleus. Its function is as follows. Orphan nuclear receptor. This Caenorhabditis elegans protein is Nuclear hormone receptor family member nhr-97 (nhr-97).